Reading from the N-terminus, the 479-residue chain is Ribulose bisphosphate carboxylase large chain (479 aa).

A propeptide spanning residues Met1–Ser2 is cleaved from the precursor. Pro3 bears the N-acetylproline mark. At Lys14 the chain carries N6,N6,N6-trimethyllysine. Residues Asn123 and Thr173 each contribute to the substrate site. The Proton acceptor role is filled by Lys175. Position 177 (Lys177) interacts with substrate. Mg(2+) is bound by residues Lys201, Asp203, and Glu204. Lys201 bears the N6-carboxylysine mark. His294 acts as the Proton acceptor in catalysis. Substrate-binding residues include Arg295, His327, and Ser379.

The protein belongs to the RuBisCO large chain family. Type I subfamily. Heterohexadecamer of 8 large chains and 8 small chains; disulfide-linked. The disulfide link is formed within the large subunit homodimers. Mg(2+) serves as cofactor. In terms of processing, the disulfide bond which can form in the large chain dimeric partners within the hexadecamer appears to be associated with oxidative stress and protein turnover.

The protein localises to the plastid. It is found in the chloroplast. It carries out the reaction 2 (2R)-3-phosphoglycerate + 2 H(+) = D-ribulose 1,5-bisphosphate + CO2 + H2O. The catalysed reaction is D-ribulose 1,5-bisphosphate + O2 = 2-phosphoglycolate + (2R)-3-phosphoglycerate + 2 H(+). Its function is as follows. RuBisCO catalyzes two reactions: the carboxylation of D-ribulose 1,5-bisphosphate, the primary event in carbon dioxide fixation, as well as the oxidative fragmentation of the pentose substrate in the photorespiration process. Both reactions occur simultaneously and in competition at the same active site. In Ananas comosus (Pineapple), this protein is Ribulose bisphosphate carboxylase large chain.